Here is a 171-residue protein sequence, read N- to C-terminus: Small ribosomal subunit protein uS4 (171 aa).

Positions 103-167 (RRLQTLVHKR…SPMKKQIEAA (65 aa)) constitute an S4 RNA-binding domain.

Belongs to the universal ribosomal protein uS4 family. In terms of assembly, part of the 30S ribosomal subunit. Contacts protein S5. The interaction surface between S4 and S5 is involved in control of translational fidelity.

Functionally, one of the primary rRNA binding proteins, it binds directly to 16S rRNA where it nucleates assembly of the body of the 30S subunit. Its function is as follows. With S5 and S12 plays an important role in translational accuracy. The polypeptide is Small ribosomal subunit protein uS4 (Methanothermobacter thermautotrophicus (strain ATCC 29096 / DSM 1053 / JCM 10044 / NBRC 100330 / Delta H) (Methanobacterium thermoautotrophicum)).